A 207-amino-acid chain; its full sequence is Mediator of RNA polymerase II transcription subunit 21 (207 aa).

The disordered stretch occupies residues 37-121; it reads PHPDVPDAAP…PDSPRTFASR (85 aa). A compositionally biased stretch (low complexity) spans 65–80; sequence PVPAQSQASPPAQNPA. Over residues 84 to 96 the composition is skewed to gly residues; sequence AGAGTSVGEGGQT. Residues 97-108 are compositionally biased toward low complexity; sequence PGPAAGAGADPN. Residues 146–196 adopt a coiled-coil conformation; the sequence is IDSSEAEQEKRIRELEGELRRVEEERELKMRELKRLRRTLENVLRAVETGL.

It belongs to the Mediator complex subunit 21 family. As to quaternary structure, component of the Mediator complex.

Its subcellular location is the nucleus. Its function is as follows. Component of the Mediator complex, a coactivator involved in the regulated transcription of nearly all RNA polymerase II-dependent genes. Mediator functions as a bridge to convey information from gene-specific regulatory proteins to the basal RNA polymerase II transcription machinery. Mediator is recruited to promoters by direct interactions with regulatory proteins and serves as a scaffold for the assembly of a functional preinitiation complex with RNA polymerase II and the general transcription factors. In Neosartorya fischeri (strain ATCC 1020 / DSM 3700 / CBS 544.65 / FGSC A1164 / JCM 1740 / NRRL 181 / WB 181) (Aspergillus fischerianus), this protein is Mediator of RNA polymerase II transcription subunit 21 (srb7).